Reading from the N-terminus, the 378-residue chain is C-X-C chemokine receptor type 3-2 (378 aa).

The Extracellular portion of the chain corresponds to 1–47 (MDNSTTAAEVSAPTDYDYNSTSYDDDNPYAAPCSLTETWNFLGRFAP). 2 N-linked (GlcNAc...) asparagine glycosylation sites follow: asparagine 3 and asparagine 19. A helical membrane pass occupies residues 48–68 (VAYILVFILALVGNILVLCVI). Topologically, residues 69-86 (RRYRQSRHSPCSFSLTDT) are cytoplasmic. A helical transmembrane segment spans residues 87–107 (FLLHLAVSDLLLAATLPFFAV). Over 108–121 (EWISEWVFGKVMCK) the chain is Extracellular. Cysteines 120 and 199 form a disulfide. Residues 122-142 (ITGALFSLNVYCGVLFLACIS) form a helical membrane-spanning segment. Residues 143–164 (FDRYLAIVHAINISWRRKTCHA) lie on the Cytoplasmic side of the membrane. The helical transmembrane segment at 165 to 185 (QLACAFIWVICLGLSMVDMHF) threads the bilayer. Over 186-212 (RDLVEIPGMNRMVCQIVYSEQYSKQWQ) the chain is Extracellular. A helical membrane pass occupies residues 213-233 (IGMQLVSMVLGFILPLLVMLY). Topologically, residues 234-253 (CYLHIFKALCHATRRQKRRS) are cytoplasmic. A helical transmembrane segment spans residues 254–274 (LRLIISLVIVFVISWAPYNAL). The Extracellular portion of the chain corresponds to 275–304 (RMTDSLQMLGVIVKSCALNNVLDVGILVTE). The chain crosses the membrane as a helical span at residues 305-325 (SLGLAHCALNPLLYGLVGVKF). Residues 326–378 (RRELAQMCKAALGPQGCLGLVGWANGRGSSTRRPTGSFSSVETENTSYFSVMA) are Cytoplasmic-facing.

This sequence belongs to the G-protein coupled receptor 1 family.

It localises to the cell membrane. In terms of biological role, receptor for the C-X-C chemokines cxcl11.1 and cxcl11.6. Promotes macrophage chemotaxis to sites of bacterial infection. The polypeptide is C-X-C chemokine receptor type 3-2 (Danio rerio (Zebrafish)).